A 489-amino-acid chain; its full sequence is METCVLLLGLFLTSVHVTTAGSAAHRCFCQVTGTLDDCACDVETIDKFNNKDIFPKLQKLLSSDYFRFYKVNLNNGCPFWTDHSQCGLKYCAVKPCSPDEVPEGLKSSSYKYSEKASHDTEECEKAEKLGAVNGSLSDETRQALEEWKKYDDESDRFCMLDDEDSPESQYVDLLLNPERFTGYKGAEAWRIWNSIYEENCFKPYSVNRPLNPLASNSGDDGQGFYRWLEGLCVEKRAFFRLISGLHASINIHLSARYLLDENWFEMKWGHNVSEFQQRFDEDLTKGEGPKRLRNLYFLYLIELRALAKILPYFERSTFQLYTGQDTQDDQNKKLLLELLHVAKSFPLHFDETALFAGNNKEAMKLKEDFKLTFKNISRIMDCVECFKCRLWGKLQTQGLGTALKILFSERQIEAMPNKQHQSIISAQSAGNCVFVQRFRKNLHKCQRVEELQIVVVETQTVTVKMFQERATVQTDMHKHMTFPMFGYIQ.

A signal peptide spans 1–20 (METCVLLLGLFLTSVHVTTA). Disulfide bonds link Cys27-Cys40, Cys29-Cys38, Cys77-Cys382, Cys86-Cys91, Cys86-Cys123, Cys91-Cys96, Cys200-Cys232, and Cys385-Cys388. FAD-binding residues include Arg179, Thr181, and Trp192. 2 residues coordinate FAD: Ser243 and His246. Asn271 carries N-linked (GlcNAc...) asparagine glycosylation. The FAD site is built by Arg278 and Arg291. Asn375 is a glycosylation site (N-linked (GlcNAc...) asparagine).

Belongs to the EROs family. In terms of assembly, predominantly monomer. May function both as a monomer and a homodimer. It depends on FAD as a cofactor. In terms of processing, the Cys-86/Cys-91 and Cys-385/Cys-388 disulfide bonds constitute the redox-active center. The Cys-86/Cys-91 disulfide bond may accept electron from protein disulfide isomerase (PDI) and funnel them to the active site disulfide Cys-385/Cys-388.

The protein resides in the endoplasmic reticulum membrane. With respect to regulation, enzyme activity is tightly regulated to prevent the accumulation of reactive oxygen species in the endoplasmic reticulum. Reversibly down-regulated by the formation of disulfide bonds between the active site Cys-86 and Cys-123, and between Cys-91 and Cys-96. Glutathione may be required to regulate its activity in the endoplasmic reticulum. Oxidoreductase involved in disulfide bond formation in the endoplasmic reticulum. Efficiently reoxidizes P4HB/PDI, the enzyme catalyzing protein disulfide formation, in order to allow P4HB to sustain additional rounds of disulfide formation. Following P4HB reoxidation, passes its electrons to molecular oxygen via FAD, leading to the production of reactive oxygen species (ROS) in the cell. Required for the folding of immunoglobulins. This Danio rerio (Zebrafish) protein is ERO1-like protein alpha.